Reading from the N-terminus, the 846-residue chain is DNA mismatch repair protein MutS (846 aa).

610–617 (GPNMGGKS) is an ATP binding site.

It belongs to the DNA mismatch repair MutS family.

This protein is involved in the repair of mismatches in DNA. It is possible that it carries out the mismatch recognition step. This protein has a weak ATPase activity. The protein is DNA mismatch repair protein MutS of Legionella pneumophila (strain Corby).